Here is a 233-residue protein sequence, read N- to C-terminus: Probable transglycosylase IsaA (233 aa).

Positions 1-29 (MKKTIMASSLAVALGVTGYAAGTGHQAHA) are cleaved as a signal peptide.

This sequence belongs to the transglycosylase family. IsaA subfamily.

It localises to the secreted. Functionally, is able to cleave peptidoglycan. The protein is Probable transglycosylase IsaA (isaA) of Staphylococcus aureus (strain Mu3 / ATCC 700698).